A 556-amino-acid polypeptide reads, in one-letter code: Putative protein SPATA31F2P (556 aa).

Disordered regions lie at residues 133-154 (ALKA…SGSD) and 210-231 (LPKT…WVSP). Positions 144–154 (SGGQDNDSGSD) are enriched in polar residues.

It belongs to the SPATA31 family.

The sequence is that of Putative protein SPATA31F2P from Homo sapiens (Human).